Here is a 710-residue protein sequence, read N- to C-terminus: Lactotransferrin (710 aa).

Residues 1-19 (MKLVFLVLLFLGALGLCLA) form the signal peptide. Position 10 is a phosphoserine; alternate (phenylalanine 10). An O-linked (GlcNAc) serine; alternate glycan is attached at phenylalanine 10. The critical for glycosaminoglycan, lipid A, lysozyme and DNA binding stretch occupies residues 20-24 (GRRRS). Bactericidal and antifungal activity stretches follow at residues 20-29 (GRRRSVQWCA) and 39-49 (FQWQRNMRKVR). The important for full bactericidal and antifungal activities stretch occupies residues 21 to 22 (RR). 2 Transferrin-like domains span residues 25–352 (VQWC…NLRK) and 364–695 (VVWC…NLKK). Intrachain disulfides connect cysteine 28/cysteine 64 and cysteine 38/cysteine 55. 2 interaction with PspA regions span residues 39–46 (FQWQRNMR) and 57–58 (KR). The tract at residues 39–49 (FQWQRNMRKVR) is interaction with lipopolysaccharide. The tract at residues 46-51 (RKVRGP) is involved in glycosaminoglycan binding. Residue aspartate 79 participates in Fe(3+) binding. Residue lysine 92 is part of the active site. Tyrosine 111 lines the Fe(3+) pocket. 4 disulfide bridges follow: cysteine 134-cysteine 217, cysteine 176-cysteine 192, cysteine 189-cysteine 200, and cysteine 250-cysteine 264. Hydrogencarbonate is bound by residues threonine 136, arginine 140, alanine 142, and glycine 143. A glycan (N-linked (GlcNAc...) asparagine) is linked at asparagine 156. Position 211 (tyrosine 211) interacts with Fe(3+). Histidine 272 serves as a coordination point for Fe(3+). Residue serine 278 is the Nucleophile of the active site. 2 disulfide bridges follow: cysteine 367-cysteine 399 and cysteine 377-cysteine 390. Residues glutamine 379 and serine 391 each participate in a glycyl lysine isopeptide (Lys-Gly) (interchain with G-Cter in ubiquitin) cross-link. The Fe(3+) site is built by aspartate 414 and tyrosine 454. Disulfide bonds link cysteine 424–cysteine 705, cysteine 446–cysteine 668, cysteine 478–cysteine 553, cysteine 502–cysteine 696, cysteine 512–cysteine 526, cysteine 523–cysteine 536, cysteine 594–cysteine 608, and cysteine 646–cysteine 651. The hydrogencarbonate site is built by threonine 480, arginine 484, alanine 486, and glycine 487. N-linked (GlcNAc...) asparagine glycosylation is present at asparagine 497. Tyrosine 547 provides a ligand contact to Fe(3+). Fe(3+) is bound at residue histidine 616. The N-linked (GlcNAc...) asparagine glycan is linked to asparagine 642.

Belongs to the transferrin family. Monomer. Found in a complex with LTF, CLU, EPPIN and SEMG1. Found in a complex with MPO and LTF; interacts directly with CP, allows Fe(3+) incorporation into LTF and activation of CP ferroxidase activity. Phosphorylation at Ser-10 activates the transcriptional activity. Phosphorylation at Ser-10 also promotes proteasomal degradation. Alternatively can undergo O-GlcNAcylation at Ser-10. Post-translationally, O-GlcNAcylation at Ser-10 inhibits DNA binding and negatively regulates the transcriptional activity. Alternatively can undergo phosphorylation at Ser-10. In terms of processing, poly-N-acetyllactosaminic carbohydrate moiety seems to be needed for TLR4 activation. In terms of tissue distribution, high levels are found in saliva and tears, intermediate levels in serum and plasma, and low levels in urine. In kidney, detected in the distal collecting tubules in the medulla but not in the cortical region or in blood vessels. Detected in peripheral blood neutrophils (at protein level). Isoform 1 and isoform DeltaLf are expressed in breast, prostate, spleen, pancreas, kidney, small intestine, lung, skeletal muscle, uterus, thymus and fetal liver. Isoform 1 is expressed in brain, testis and peripheral blood leukocytes; isoform DeltaLf is barely detectable in these tissues. Isoform DeltaLf is expressed in placenta, liver and ovary; isoform 1 is barely detectable in these tissues. In kidney, isoform 1 is expressed at high levels in the collecting tubules of the medulla but at very low levels in the cortex.

The protein localises to the secreted. Its subcellular location is the cytoplasmic granule. It is found in the cytoplasm. It localises to the nucleus. In terms of biological role, transferrins are iron binding transport proteins which can bind two Fe(3+) ions in association with the binding of an anion, usually bicarbonate. Functionally, major iron-binding and multifunctional protein found in exocrine fluids such as breast milk and mucosal secretions. Has antimicrobial activity, which depends on the extracellular cation concentration. Antimicrobial properties include bacteriostasis, which is related to its ability to sequester free iron and thus inhibit microbial growth, as well as direct bactericidal properties leading to the release of lipopolysaccharides from the bacterial outer membrane. Can also prevent bacterial biofilm development in P.aeruginosa infection. Has weak antifungal activity against C.albicans. Has anabolic, differentiating and anti-apoptotic effects on osteoblasts and can also inhibit osteoclastogenesis, possibly playing a role in the regulation of bone growth. Promotes binding of species C adenoviruses to epithelial cells, promoting adenovirus infection. Can inhibit papillomavirus infections. Stimulates the TLR4 signaling pathway leading to NF-kappa-B activation and subsequent pro-inflammatory cytokine production while also interfering with the lipopolysaccharide (LPS)-stimulated TLR4 signaling. Inhibits neutrophil granulocyte migration to sites of apoptosis, when secreted by apoptotic cells. Stimulates VEGFA-mediated endothelial cell migration and proliferation. Binds heparin, chondroitin sulfate and possibly other glycosaminoglycans (GAGs). Also binds specifically to pneumococcal surface protein A (PspA), the lipid A portion of bacterial lipopolysaccharide (LPS), lysozyme and DNA. Lactoferricin binds to the bacterial surface and is crucial for the bactericidal functions. Has some antiviral activity against papillomavirus infection. N-terminal region shows strong antifungal activity against C.albicans. Contains two BBXB heparin-binding consensus sequences that appear to form the predominate functional GAG-binding site. Its function is as follows. Has antimicrobial activity and is able to permeabilize different ions through liposomal membranes. In terms of biological role, has opioid antagonist activity. Shows preference for mu-receptor. Functionally, has opioid antagonist activity. Shows higher degrees of preference for kappa-receptors than for mu-receptors. The lactotransferrin transferrin-like domain 1 functions as a serine protease of the peptidase S60 family that cuts arginine rich regions. This function contributes to the antimicrobial activity. Shows a preferential cleavage at -Arg-Ser-Arg-Arg-|- and -Arg-Arg-Ser-Arg-|-, and of Z-Phe-Arg-|-aminomethylcoumarin sites. Its function is as follows. Transcription factor with antiproliferative properties and ability to induce cell cycle arrest. Binds to the DeltaLf response element found in the SKP1, BAX, DCPS, and SELENOH promoters. In Homo sapiens (Human), this protein is Lactotransferrin.